Consider the following 407-residue polypeptide: Imidazolonepropionase (407 aa).

2 residues coordinate Fe(3+): H68 and H70. Positions 68 and 70 each coordinate Zn(2+). 4-imidazolone-5-propanoate is bound by residues R77, Y140, and H173. Y140 is a binding site for N-formimidoyl-L-glutamate. H238 contacts Fe(3+). Residue H238 coordinates Zn(2+). 4-imidazolone-5-propanoate is bound at residue Q241. D313 lines the Fe(3+) pocket. Zn(2+) is bound at residue D313. N315 and G317 together coordinate N-formimidoyl-L-glutamate. T318 is a binding site for 4-imidazolone-5-propanoate.

This sequence belongs to the metallo-dependent hydrolases superfamily. HutI family. Zn(2+) serves as cofactor. It depends on Fe(3+) as a cofactor.

Its subcellular location is the cytoplasm. It catalyses the reaction 4-imidazolone-5-propanoate + H2O = N-formimidoyl-L-glutamate. The protein operates within amino-acid degradation; L-histidine degradation into L-glutamate; N-formimidoyl-L-glutamate from L-histidine: step 3/3. Functionally, catalyzes the hydrolytic cleavage of the carbon-nitrogen bond in imidazolone-5-propanoate to yield N-formimidoyl-L-glutamate. It is the third step in the universal histidine degradation pathway. The sequence is that of Imidazolonepropionase from Burkholderia cenocepacia (strain ATCC BAA-245 / DSM 16553 / LMG 16656 / NCTC 13227 / J2315 / CF5610) (Burkholderia cepacia (strain J2315)).